The chain runs to 182 residues: T-cell surface glycoprotein CD3 gamma chain (182 aa).

The signal sequence occupies residues 1-22 (MEQGKHLAGLILAITLLQGTMA). An Ig-like domain is found at 23 to 98 (QLKEGKHSVL…GSKENSKRLQ (76 aa)). The Extracellular portion of the chain corresponds to 23 to 116 (QLKEGKHSVL…CIELNSATVS (94 aa)). C46 and C87 are oxidised to a cystine. A glycan (N-linked (GlcNAc...) asparagine) is linked at N66. A helical transmembrane segment spans residues 117–137 (GFIFTEIISLFFLAVGVYFIA). Residues 138-182 (GQDGVRQSRASDKQTLLSNDQLYQPLKDREDDQYSHLQGNNSRKN) lie on the Cytoplasmic side of the membrane. At S145 the chain carries Phosphoserine. S148 is modified (phosphoserine; by PKC). In terms of domain architecture, ITAM spans 149–177 (DKQTLLSNDQLYQPLKDREDDQYSHLQGN). The Di-leucine motif signature appears at 153–154 (LL).

The TCR-CD3 complex is composed of a CD3D/CD3E and a CD3G/CD3E heterodimers that preferentially associate with TCRalpha and TCRbeta, respectively, to form TCRalpha/CD3E/CD3G and TCRbeta/CD3G/CD3E trimers. In turn, the hexamer interacts with CD3Z homodimer to form the TCR-CD3 complex. Alternatively, TCRalpha and TCRbeta can be replaced by TCRgamma and TCRdelta. Phosphorylated on Tyr residues after T-cell receptor triggering by LCK in association with CD4/CD8. Phosphorylated also by PKC; leading to the TCR complex down-regulation. Post-translationally, phosphorylated on Tyr residues after T-cell receptor triggering by LCK in association with CD4/CD8.

The protein resides in the cell membrane. Functionally, part of the TCR-CD3 complex present on T-lymphocyte cell surface that plays an essential role in adaptive immune response. When antigen presenting cells (APCs) activate T-cell receptor (TCR), TCR-mediated signals are transmitted across the cell membrane by the CD3 chains CD3D, CD3E, CD3G and CD3Z. All CD3 chains contain immunoreceptor tyrosine-based activation motifs (ITAMs) in their cytoplasmic domain. Upon TCR engagement, these motifs become phosphorylated by Src family protein tyrosine kinases LCK and FYN, resulting in the activation of downstream signaling pathways. In addition to this role of signal transduction in T-cell activation, CD3G plays an essential role in the dynamic regulation of TCR expression at the cell surface. Indeed, constitutive TCR cycling is dependent on the di-leucine-based (diL) receptor-sorting motif present in CD3G. The polypeptide is T-cell surface glycoprotein CD3 gamma chain (CD3G) (Sus scrofa (Pig)).